Here is a 264-residue protein sequence, read N- to C-terminus: Phosphonoacetaldehyde hydrolase (264 aa).

D9 functions as the Nucleophile in the catalytic mechanism. Residues D9 and A11 each coordinate Mg(2+). K50 acts as the Schiff-base intermediate with substrate in catalysis. D183 is a binding site for Mg(2+).

The protein belongs to the HAD-like hydrolase superfamily. PhnX family. Homodimer. The cofactor is Mg(2+).

The enzyme catalyses phosphonoacetaldehyde + H2O = acetaldehyde + phosphate + H(+). Involved in phosphonate degradation. The polypeptide is Phosphonoacetaldehyde hydrolase (Bacillus cereus (strain G9842)).